Here is an 872-residue protein sequence, read N- to C-terminus: MTTATKDLSSHTPMMRQYLTIKAEFPHTLIFYRMGDFYELFFDDAKKASDLLDISLTARGKTGGNAIPMAGVPYHAAENYLAKLVALGESVAICEQIGDPATSKGPVERKVVRVITPGTVSDEALLVDRQDNLIVAIVDNQSPNAKLKTSSAPAFGLAYLDMASGRFVLTEPQTAEQLQAELQRLSPAELLYSESLQDFSLIEQRKGLRRRPEWEFDLDTAISLLNKQFDTKELTGFGVDDKPLGLAAAGCLFQYVKDTQRTALPHIRAIVCESANKGVVLDAATRRNLELTQNLHGGLDNTLAAILDKSSTPMGSRLLKRWLHFPLRDLTVLNNRQNTVSDIIALDLIAPIQPLLKGLGDIERIVSRIALGSARPRDFARLRHALQQLPELQNELKSGLTESPTNYLATIAQQSQPMPQLEGLLVHAIVENPPVLIRDGGVIAPGYNNELDVLRDLSDGATEFLAQLEQREKERTGIHSLKVGYNRVHGFFIEMSRTAAVDVPDDYIRRQTLKNNERFITEELKQHEEKVLSAQSKFLALEKSLYQELFDKVLPDLAQLQQLSQAIAELDVLTTFAERALALNYVKPSLVEEPGISIDAGRHVVVEQMTNDAFIANPVLLTEQRKMLIITGPNMGGKSTYMRQTALIVLLAHIGCYVPADNATIGLVDRIFTRIGASDDLASGRSTFMVEMTETANILHNATDKSLVLLDEIGRGTSTYDGLSLAWACAEMLALKTKAFTLFATHYFELTLLAGQISTLANVHLDAMEHDDNIVFMHAVQEGAASKSFGLQVAQLAGVPKTVIKRAKQRLSELEQQQTPSILPAPIQNDAFEQLSFAPEEHSVVTTLIDTDINELSPRQALDLLFSLKEQL.

Residue 632–639 (GPNMGGKS) coordinates ATP.

This sequence belongs to the DNA mismatch repair MutS family.

Functionally, this protein is involved in the repair of mismatches in DNA. It is possible that it carries out the mismatch recognition step. This protein has a weak ATPase activity. The chain is DNA mismatch repair protein MutS from Colwellia psychrerythraea (strain 34H / ATCC BAA-681) (Vibrio psychroerythus).